The primary structure comprises 613 residues: Dihydroxy-acid dehydratase (613 aa).

Asp-81 is a binding site for Mg(2+). [2Fe-2S] cluster is bound at residue Cys-122. Residues Asp-123 and Lys-124 each contribute to the Mg(2+) site. Lys-124 is subject to N6-carboxylysine. Cys-193 serves as a coordination point for [2Fe-2S] cluster. Glu-489 serves as a coordination point for Mg(2+). Ser-515 serves as the catalytic Proton acceptor.

The protein belongs to the IlvD/Edd family. In terms of assembly, homodimer. The cofactor is [2Fe-2S] cluster. It depends on Mg(2+) as a cofactor.

The catalysed reaction is (2R)-2,3-dihydroxy-3-methylbutanoate = 3-methyl-2-oxobutanoate + H2O. It catalyses the reaction (2R,3R)-2,3-dihydroxy-3-methylpentanoate = (S)-3-methyl-2-oxopentanoate + H2O. Its pathway is amino-acid biosynthesis; L-isoleucine biosynthesis; L-isoleucine from 2-oxobutanoate: step 3/4. It functions in the pathway amino-acid biosynthesis; L-valine biosynthesis; L-valine from pyruvate: step 3/4. In terms of biological role, functions in the biosynthesis of branched-chain amino acids. Catalyzes the dehydration of (2R,3R)-2,3-dihydroxy-3-methylpentanoate (2,3-dihydroxy-3-methylvalerate) into 2-oxo-3-methylpentanoate (2-oxo-3-methylvalerate) and of (2R)-2,3-dihydroxy-3-methylbutanoate (2,3-dihydroxyisovalerate) into 2-oxo-3-methylbutanoate (2-oxoisovalerate), the penultimate precursor to L-isoleucine and L-valine, respectively. The polypeptide is Dihydroxy-acid dehydratase (Pseudomonas fluorescens (strain ATCC BAA-477 / NRRL B-23932 / Pf-5)).